The following is a 165-amino-acid chain: Protein-export protein SecB (165 aa).

The protein belongs to the SecB family. Homotetramer, a dimer of dimers. One homotetramer interacts with 1 SecA dimer.

It is found in the cytoplasm. One of the proteins required for the normal export of preproteins out of the cell cytoplasm. It is a molecular chaperone that binds to a subset of precursor proteins, maintaining them in a translocation-competent state. It also specifically binds to its receptor SecA. The chain is Protein-export protein SecB from Marinobacter nauticus (strain ATCC 700491 / DSM 11845 / VT8) (Marinobacter aquaeolei).